Here is a 216-residue protein sequence, read N- to C-terminus: Pyrophosphatase PpaX (216 aa).

The active-site Nucleophile is the Asp12.

The protein belongs to the HAD-like hydrolase superfamily. PpaX family. Mg(2+) serves as cofactor.

The catalysed reaction is diphosphate + H2O = 2 phosphate + H(+). Functionally, hydrolyzes pyrophosphate formed during P-Ser-HPr dephosphorylation by HPrK/P. Might play a role in controlling the intracellular pyrophosphate pool. This is Pyrophosphatase PpaX from Bacillus velezensis (strain DSM 23117 / BGSC 10A6 / LMG 26770 / FZB42) (Bacillus amyloliquefaciens subsp. plantarum).